A 489-amino-acid polypeptide reads, in one-letter code: Lysine-specific permease LysP (489 aa).

At 2–22 (VSETKTTEAPGLRRELKARHL) the chain is on the cytoplasmic side. The helical transmembrane segment at 23–43 (TMIAIGGSIGTGLFVASGATI) threads the bilayer. Over 44–45 (SQ) the chain is Periplasmic. The chain crosses the membrane as a helical span at residues 46–66 (AGPGGALLSYMLIGLMVYFLM). The Cytoplasmic segment spans residues 67–105 (TSLGELAAYMPVSGSFATYGQNYVEEGFGFALGWNYWYN). The helical transmembrane segment at 106–126 (WAVTIAVDLVAAQLVMSWWFP) threads the bilayer. Topologically, residues 127 to 128 (DT) are periplasmic. Residues 129–149 (PGWIWSALFLGVIFLLNYISV) form a helical membrane-spanning segment. The Cytoplasmic segment spans residues 150 to 161 (RGFGEAEYWFSL). Residues 162–182 (IKVTTVIVFIIVGVLMIIGIF) traverse the membrane as a helical segment. Topologically, residues 183–197 (KGAQPAGWSNWTIGE) are periplasmic. A helical transmembrane segment spans residues 198–218 (APFAGGFAAMIGVAMIVGFSF). Residues 219 to 244 (QGTELIGIAAGESEDPAKNIPRAVRQ) are Cytoplasmic-facing. Residues 245–265 (VFWRILLFYVFAILIISLIIP) form a helical membrane-spanning segment. Residues 266 to 290 (YTDPSLLRNDVKDISVSPFTLVFQH) lie on the Periplasmic side of the membrane. Residues 291–311 (AGLLSAAAVMNAVILTAVLSA) traverse the membrane as a helical segment. The Cytoplasmic portion of the chain corresponds to 312-346 (GNSGMYASTRMLYTLACDGKAPRIFAKLSRGGVPR). A helical membrane pass occupies residues 347 to 367 (NALYATTVIAGLCFLTSMFGN). The Periplasmic portion of the chain corresponds to 368 to 370 (QTV). Residues 371–391 (YLWLLNTSGMTGFIAWLGIAI) traverse the membrane as a helical segment. The Cytoplasmic portion of the chain corresponds to 392-413 (SHYRFRRGYVLQGHDINDLPYR). The chain crosses the membrane as a helical span at residues 414-434 (SGFFPLGPIFAFILCLIITLG). The Periplasmic portion of the chain corresponds to 435–446 (QNYEAFLKDTID). The helical transmembrane segment at 447–467 (WGGVAATYIGIPLFLIIWFGY) threads the bilayer. At 468–489 (KLIKGTHFVRYSEMKFPQNDKK) the chain is on the cytoplasmic side.

It belongs to the amino acid-polyamine-organocation (APC) superfamily. Amino acid transporter (AAT) (TC 2.A.3.1) family. As to quaternary structure, interacts strongly with the transcriptional activator CadC in the absence of lysine or at low lysine concentrations. Interaction is markedly attenuated under increasing lysine levels. Concomitant pH-dependent protonation of periplasmic amino acids in both proteins dissolves their electrostatic connections resulting in further destabilization of the CadC/LysP interaction. Low pH promotes oligomerization of LysP.

It localises to the cell inner membrane. It carries out the reaction L-lysine(out) + H(+)(out) = L-lysine(in) + H(+)(in). Permease involved in lysine uptake. In addition, functions as a lysine sensor that mediates the lysine-dependent regulation of the transcriptional activator CadC. In the absence of lysine, or at low lysine concentrations, LysP inhibits CadC by an interaction with the transmembrane domain of CadC. In the presence of lysine, LysP loses its ability to interact with and inhibit CadC, and acts as a lysine permease. In Escherichia coli (strain K12), this protein is Lysine-specific permease LysP.